We begin with the raw amino-acid sequence, 195 residues long: Ribonuclease HII (195 aa).

One can recognise an RNase H type-2 domain in the interval 1-195; sequence MICGIDEAGR…SWRTLRYLNT (195 aa). A divalent metal cation contacts are provided by Asp-6, Glu-7, and Asp-101.

It belongs to the RNase HII family. Mn(2+) is required as a cofactor. Requires Mg(2+) as cofactor.

The protein resides in the cytoplasm. The enzyme catalyses Endonucleolytic cleavage to 5'-phosphomonoester.. In terms of biological role, endonuclease that specifically degrades the RNA of RNA-DNA hybrids. The polypeptide is Ribonuclease HII (Pyrobaculum islandicum (strain DSM 4184 / JCM 9189 / GEO3)).